A 509-amino-acid chain; its full sequence is Dihydrolipoyl dehydrogenase, mitochondrial (509 aa).

The transit peptide at 1 to 35 directs the protein to the mitochondrion; that stretch reads MQSWSRVYCSLAKRGHFNRISHGLQGLSAVPLRTY. At K66 the chain carries N6-acetyllysine; alternate. Position 66 is an N6-succinyllysine; alternate (K66). Residues 71-80 and K89 each bind FAD; that span reads EKNETLGGTC. An intrachain disulfide couples C80 to C85. Residues K104, K122, K132, and K143 each carry the N6-acetyllysine; alternate modification. An N6-succinyllysine; alternate mark is found at K104, K122, K132, and K143. Position 154 (G154) interacts with FAD. Residues K159 and K166 each carry the N6-succinyllysine modification. 183 to 185 provides a ligand contact to FAD; that stretch reads TGS. NAD(+)-binding positions include 220-227 and E243; that span reads GAGVIGVE. 2 positions are modified to N6-succinyllysine: K273 and K277. Residue V278 participates in NAD(+) binding. A phosphoserine mark is found at S285 and S297. G314 is a binding site for NAD(+). N6-acetyllysine is present on K346. FAD is bound by residues D355 and 361 to 364; that span reads MLAH. At K410 the chain carries N6-acetyllysine; alternate. An N6-succinyllysine; alternate modification is found at K410. An N6-acetyllysine mark is found at K417 and K420. At K430 the chain carries N6-succinyllysine. Residue H487 is the Proton acceptor of the active site. Residue S502 is modified to Phosphoserine. The residue at position 505 (K505) is an N6-acetyllysine; alternate. An N6-succinyllysine; alternate modification is found at K505.

Belongs to the class-I pyridine nucleotide-disulfide oxidoreductase family. Homodimer. Part of the multimeric pyruvate dehydrogenase complex that contains multiple copies of pyruvate dehydrogenase (subunits PDHA (PDHA1 or PDHA2) and PDHB, E1), dihydrolipoamide acetyltransferase (DLAT, E2) and lipoamide dehydrogenase (DLD, E3). These subunits are bound to an inner core composed of about 48 DLAT and 12 PDHX molecules (by non covalent bonds). The 2-oxoglutarate dehydrogenase complex is composed of OGDH (2-oxoglutarate dehydrogenase; E1), DLST (dihydrolipoamide succinyltransferase; E2), DLD (dihydrolipoamide dehydrogenase; E3) and the assembly factor KGD4. It contains multiple copies of the three enzymatic components (E1, E2 and E3). In the nucleus, the 2-oxoglutarate dehydrogenase complex associates with KAT2A. Interacts with PDHX. FAD is required as a cofactor. Tyrosine phosphorylated.

The protein resides in the mitochondrion matrix. The protein localises to the nucleus. It is found in the cell projection. Its subcellular location is the cilium. It localises to the flagellum. The protein resides in the cytoplasmic vesicle. The protein localises to the secretory vesicle. It is found in the acrosome. It catalyses the reaction N(6)-[(R)-dihydrolipoyl]-L-lysyl-[protein] + NAD(+) = N(6)-[(R)-lipoyl]-L-lysyl-[protein] + NADH + H(+). Disruption of native heterodimer state inhibits primary dihydrolipoamide dehydrogenase activity and induces serine protease activity. Lipoamide dehydrogenase is a component of the glycine cleavage system as well as an E3 component of three alpha-ketoacid dehydrogenase complexes (pyruvate-, alpha-ketoglutarate-, and branched-chain amino acid-dehydrogenase complex). The 2-oxoglutarate dehydrogenase complex is mainly active in the mitochondrion. A fraction of the 2-oxoglutarate dehydrogenase complex also localizes in the nucleus and is required for lysine succinylation of histones: associates with KAT2A on chromatin and provides succinyl-CoA to histone succinyltransferase KAT2A. In monomeric form may have additional moonlighting function as serine protease. Involved in the hyperactivation of spermatazoa during capacitation and in the spermatazoal acrosome reaction. The protein is Dihydrolipoyl dehydrogenase, mitochondrial (DLD) of Homo sapiens (Human).